The chain runs to 185 residues: Ribosome-recycling factor (185 aa).

Belongs to the RRF family.

The protein localises to the cytoplasm. Functionally, responsible for the release of ribosomes from messenger RNA at the termination of protein biosynthesis. May increase the efficiency of translation by recycling ribosomes from one round of translation to another. The chain is Ribosome-recycling factor from Legionella pneumophila (strain Corby).